The primary structure comprises 100 residues: Integration host factor subunit alpha (100 aa).

The disordered stretch occupies residues 53-72 (FQLRDKPQRPGRNPKTGEEV).

The protein belongs to the bacterial histone-like protein family. In terms of assembly, heterodimer of an alpha and a beta chain.

Its function is as follows. This protein is one of the two subunits of integration host factor, a specific DNA-binding protein that functions in genetic recombination as well as in transcriptional and translational control. The chain is Integration host factor subunit alpha from Neisseria gonorrhoeae (strain ATCC 700825 / FA 1090).